The chain runs to 463 residues: Chaperone SurA (463 aa).

The first 25 residues, 1–25, serve as a signal peptide directing secretion; the sequence is MTKPFSVVLASLLAITSTISPLASA. 2 consecutive PpiC domains span residues 174–276 and 289–388; these read GSKY…KLME and VTEY…QRVG. Disordered stretches follow at residues 329-348 and 434-463; these read ATAKESSEDTNSRGQGGDLG and GDRADNNATAAPAKSADPALPAPPPAKPTR. Residues 439-452 are compositionally biased toward low complexity; sequence NNATAAPAKSADPA. Positions 453 to 463 are enriched in pro residues; sequence LPAPPPAKPTR.

It localises to the periplasm. The catalysed reaction is [protein]-peptidylproline (omega=180) = [protein]-peptidylproline (omega=0). Functionally, chaperone involved in the correct folding and assembly of outer membrane proteins. Recognizes specific patterns of aromatic residues and the orientation of their side chains, which are found more frequently in integral outer membrane proteins. May act in both early periplasmic and late outer membrane-associated steps of protein maturation. The sequence is that of Chaperone SurA from Xanthomonas oryzae pv. oryzae (strain KACC10331 / KXO85).